Here is a 216-residue protein sequence, read N- to C-terminus: Maleylacetoacetate isomerase (216 aa).

Position 1 is an N-acetylmethionine (Met1). The GST N-terminal domain occupies 4–87 (GKPILYSYFR…YLEETRPIPR (84 aa)). Glutathione contacts are provided by residues 14–19 (SSCSWR) and Gln45. Lys57 is modified (N6-succinyllysine). Residues Val59, 71 to 72 (QS), Gln111, and 115 to 117 (NLS) contribute to the glutathione site. Positions 92–212 (DPQKRAIVRM…HPRRQPDTPA (121 aa)) constitute a GST C-terminal domain. Thr136 carries the phosphothreonine modification. Residue Ser137 is modified to Phosphoserine. At Lys177 the chain carries N6-succinyllysine. Residue Ser181 is modified to Phosphoserine.

Belongs to the GST superfamily. Zeta family. Homodimer. It depends on glutathione as a cofactor. In terms of tissue distribution, expressed in liver, kidney, seminal glands and breast.

Its subcellular location is the cytoplasm. The catalysed reaction is 4-maleylacetoacetate = 4-fumarylacetoacetate. It carries out the reaction RX + glutathione = an S-substituted glutathione + a halide anion + H(+). Its pathway is amino-acid degradation; L-phenylalanine degradation; acetoacetate and fumarate from L-phenylalanine: step 5/6. Its function is as follows. Probable bifunctional enzyme showing minimal glutathione-conjugating activity with ethacrynic acid and 7-chloro-4-nitrobenz-2-oxa-1, 3-diazole and maleylacetoacetate isomerase activity. Also has low glutathione peroxidase activity with t-butyl and cumene hydroperoxides. Is able to catalyze the glutathione dependent oxygenation of dichloroacetic acid to glyoxylic acid. This is Maleylacetoacetate isomerase (Gstz1) from Mus musculus (Mouse).